The primary structure comprises 67 residues: DNA-directed RNA polymerase subunit omega (67 aa).

Belongs to the RNA polymerase subunit omega family. In terms of assembly, the RNAP catalytic core consists of 2 alpha, 1 beta, 1 beta' and 1 omega subunit. When a sigma factor is associated with the core the holoenzyme is formed, which can initiate transcription.

It catalyses the reaction RNA(n) + a ribonucleoside 5'-triphosphate = RNA(n+1) + diphosphate. Functionally, promotes RNA polymerase assembly. Latches the N- and C-terminal regions of the beta' subunit thereby facilitating its interaction with the beta and alpha subunits. The sequence is that of DNA-directed RNA polymerase subunit omega from Legionella pneumophila (strain Paris).